The following is a 254-amino-acid chain: Proteasome subunit alpha (254 aa).

The tract at residues Glu231 to Glu254 is disordered. A compositionally biased stretch (acidic residues) spans Gly239 to Glu254.

This sequence belongs to the peptidase T1A family. The 20S proteasome core is composed of 14 alpha and 14 beta subunits that assemble into four stacked heptameric rings, resulting in a barrel-shaped structure. The two inner rings, each composed of seven catalytic beta subunits, are sandwiched by two outer rings, each composed of seven alpha subunits. The catalytic chamber with the active sites is on the inside of the barrel. Has probably a gated structure, the ends of the cylinder being occluded by the N-termini of the alpha-subunits. Is likely capped by the proteasome-associated ATPase, ARC. In terms of processing, the N-terminus is blocked.

The protein resides in the cytoplasm. It participates in protein degradation; proteasomal Pup-dependent pathway. Its activity is regulated as follows. The formation of the proteasomal ATPase ARC-20S proteasome complex, likely via the docking of the C-termini of ARC into the intersubunit pockets in the alpha-rings, may trigger opening of the gate for substrate entry. Interconversion between the open-gate and close-gate conformations leads to a dynamic regulation of the 20S proteasome proteolysis activity. Peptidolytic activity is completely inhibited by lactacystin, and to a lesser extent, by N-acetyl-Leu-Leu-norleucinal (Ac-LLnL) and benzoyloxycarbonyl-Leu-Leu-Leu-vinylsulfone (Z-LLL-VS) in vitro. In terms of biological role, component of the proteasome core, a large protease complex with broad specificity involved in protein degradation. The S.coelicolor proteasome is able to cleave oligopeptides after hydrophobic residues, but not after basic or acidic residues, thus displaying chymotrypsin-like activity but not trypsin-like activity. The chain is Proteasome subunit alpha from Streptomyces coelicolor (strain ATCC BAA-471 / A3(2) / M145).